The chain runs to 175 residues: Enhancer of mRNA-decapping protein 1 (175 aa).

Polar residues predominate over residues 1–27 (MSTDTMYFNSSRLLPSAGRNKTNNLIK). 2 disordered regions span residues 1-113 (MSTD…KDDT) and 155-175 (GSTFATNGPREAKNLPKPSFL). The residue at position 2 (Ser2) is an N-acetylserine. Over residues 35–47 (ARGNAAKNANNNN) the composition is skewed to low complexity. Residues 58–77 (LPNGQKPNFGHSSNKKPSFN) are compositionally biased toward polar residues. Position 82 is a phosphoserine (Ser82). Positions 100–113 (NNKETPRQNNKDDT) are enriched in basic and acidic residues.

Belongs to the EDC family.

Its subcellular location is the cytoplasm. MRNA-binding protein which stimulates mRNA decapping by DCP1 and DCP2. Involved in the regulation of expression of multiple genes involved in glycolysis and gluconeogenesis. The chain is Enhancer of mRNA-decapping protein 1 (EDC1) from Saccharomyces cerevisiae (strain ATCC 204508 / S288c) (Baker's yeast).